The chain runs to 218 residues: Large ribosomal subunit protein uL3c (218 aa).

The tract at residues 127–161 (GFSRGPMTHGSKNHREPGSTGAGTTPGRIYPGKRM) is disordered.

It belongs to the universal ribosomal protein uL3 family. Part of the 50S ribosomal subunit.

The protein localises to the plastid. Its subcellular location is the organellar chromatophore. Functionally, one of the primary rRNA binding proteins, it binds directly near the 3'-end of the 23S rRNA, where it nucleates assembly of the 50S subunit. The polypeptide is Large ribosomal subunit protein uL3c (rpl3) (Paulinella chromatophora).